The following is a 224-amino-acid chain: MWYIIVIIIIIIILNLFIIILLTLKILDDIQELYPNPPIVPPPTSPPIVPLPTPPPTPTPSPPSPTPPPTPIPPTPTPTPPPTPIPPTPTPTPPPSPIPPTPTPSPPPSPIPPTPTPSPPPSPIPPTPTPSPPPSPSPLGEPMYYPSNIDTNEALINFLRPLCATDRTRATYAVPWNCNGIFHCNYFSIPFYILSCHNNAYSFVNDGCIDFNSSDCPLYPLNVL.

Pro residues predominate over residues 44–139; sequence TSPPIVPLPT…PSPPPSPSPL (96 aa). The segment at 44–145 is disordered; it reads TSPPIVPLPT…PSPLGEPMYY (102 aa).

This is an uncharacterized protein from Lepidoptera (butterflies and moths).